An 85-amino-acid chain; its full sequence is Large ribosomal subunit protein bL27 (85 aa).

Belongs to the bacterial ribosomal protein bL27 family.

The chain is Large ribosomal subunit protein bL27 from Ruthia magnifica subsp. Calyptogena magnifica.